A 314-amino-acid chain; its full sequence is Porphobilinogen deaminase (314 aa).

Cys-234 carries the S-(dipyrrolylmethanemethyl)cysteine modification.

Belongs to the HMBS family. As to quaternary structure, monomer. Requires dipyrromethane as cofactor.

The enzyme catalyses 4 porphobilinogen + H2O = hydroxymethylbilane + 4 NH4(+). Its pathway is porphyrin-containing compound metabolism; protoporphyrin-IX biosynthesis; coproporphyrinogen-III from 5-aminolevulinate: step 2/4. Tetrapolymerization of the monopyrrole PBG into the hydroxymethylbilane pre-uroporphyrinogen in several discrete steps. In Mycobacterium ulcerans (strain Agy99), this protein is Porphobilinogen deaminase.